A 264-amino-acid polypeptide reads, in one-letter code: Intermembrane phospholipid transport system ATP-binding protein MlaF (264 aa).

Residues 6–242 (IEVKNLTFKR…QDLRVVQFLK (237 aa)) enclose the ABC transporter domain. Residue 38 to 45 (GPSGIGKT) participates in ATP binding.

This sequence belongs to the ABC transporter superfamily. MlaF family. As to quaternary structure, the complex is composed of two ATP-binding proteins (MlaF), two transmembrane proteins (MlaE), two cytoplasmic solute-binding proteins (MlaB) and six periplasmic solute-binding proteins (MlaD).

It is found in the cell inner membrane. Functionally, part of the ABC transporter complex MlaFEDB, which is involved in a phospholipid transport pathway that maintains lipid asymmetry in the outer membrane by retrograde trafficking of phospholipids from the outer membrane to the inner membrane. Responsible for energy coupling to the transport system. The chain is Intermembrane phospholipid transport system ATP-binding protein MlaF from Haemophilus influenzae (strain ATCC 51907 / DSM 11121 / KW20 / Rd).